The following is a 664-amino-acid chain: Chaperone protein dnaK1 (664 aa).

T198 is modified (phosphothreonine; by autocatalysis).

It belongs to the heat shock protein 70 family.

In terms of biological role, acts as a chaperone. The protein is Chaperone protein dnaK1 (dnaK1) of Prochlorococcus marinus (strain MIT 9313).